The sequence spans 375 residues: Probable dipeptidase PepE (375 aa).

The next 2 membrane-spanning stretches (helical) occupy residues 15-35 (LALAAAATADAGLAGLVITPG) and 55-75 (LVLPAAGAPAVVLPRLELAAL). Residues aspartate 230, aspartate 242, histidine 306, glutamate 335, and glutamate 349 each contribute to the Mn(2+) site.

This sequence belongs to the peptidase M24B family. Mn(2+) serves as cofactor.

The protein localises to the cell membrane. The chain is Probable dipeptidase PepE (pepE) from Mycobacterium bovis (strain ATCC BAA-935 / AF2122/97).